Here is a 657-residue protein sequence, read N- to C-terminus: Archaeal Lon protease (657 aa).

The Cytoplasmic segment spans residues 1 to 123 (MEENIESVEE…KAEREKRDRS (123 aa)). 57 to 64 (GEPGTGKS) lines the ATP pocket. Residues 124-144 (RSIMFVIFSVVLLGIIAAIVL) traverse the membrane as a helical segment. A topological domain (extracellular) is located at residue Arg145. A helical membrane pass occupies residues 146–166 (SITLIFFAIMAAAFLYMAMAF). Topologically, residues 167–657 (NPVIRNERAM…ATTRAGNNAA (491 aa)) are cytoplasmic. One can recognise a Lon proteolytic domain in the interval 433 to 618 (GSVVGMVNGL…EDVLRVALVN (186 aa)). Active-site residues include Ser525 and Lys568.

This sequence belongs to the peptidase S16 family. Archaeal LonB subfamily. In terms of assembly, homohexamer. Organized in a ring with a central cavity.

It localises to the cell membrane. Functionally, ATP-dependent serine protease that mediates the selective degradation of mutant and abnormal proteins as well as certain short-lived regulatory proteins. Degrades polypeptides processively. The polypeptide is Archaeal Lon protease (Thermoplasma acidophilum (strain ATCC 25905 / DSM 1728 / JCM 9062 / NBRC 15155 / AMRC-C165)).